Reading from the N-terminus, the 116-residue chain is Cell cycle protein GpsB (116 aa).

The stretch at 32–69 (LDDVIKDYETYSALVKELREENSRLKQELSKRMQEAPN) forms a coiled coil. A disordered region spans residues 57 to 78 (KQELSKRMQEAPNSTASQVHQS). The span at 67–78 (APNSTASQVHQS) shows a compositional bias: polar residues.

Belongs to the GpsB family. In terms of assembly, forms polymers through the coiled coil domains. Interacts with PBP1, MreC and EzrA.

It is found in the cytoplasm. In terms of biological role, divisome component that associates with the complex late in its assembly, after the Z-ring is formed, and is dependent on DivIC and PBP2B for its recruitment to the divisome. Together with EzrA, is a key component of the system that regulates PBP1 localization during cell cycle progression. Its main role could be the removal of PBP1 from the cell pole after pole maturation is completed. Also contributes to the recruitment of PBP1 to the division complex. Not essential for septum formation. This Streptococcus gordonii (strain Challis / ATCC 35105 / BCRC 15272 / CH1 / DL1 / V288) protein is Cell cycle protein GpsB.